We begin with the raw amino-acid sequence, 499 residues long: Aspartyl/glutamyl-tRNA(Asn/Gln) amidotransferase subunit B (499 aa).

It belongs to the GatB/GatE family. GatB subfamily. As to quaternary structure, heterotrimer of A, B and C subunits.

It carries out the reaction L-glutamyl-tRNA(Gln) + L-glutamine + ATP + H2O = L-glutaminyl-tRNA(Gln) + L-glutamate + ADP + phosphate + H(+). It catalyses the reaction L-aspartyl-tRNA(Asn) + L-glutamine + ATP + H2O = L-asparaginyl-tRNA(Asn) + L-glutamate + ADP + phosphate + 2 H(+). Allows the formation of correctly charged Asn-tRNA(Asn) or Gln-tRNA(Gln) through the transamidation of misacylated Asp-tRNA(Asn) or Glu-tRNA(Gln) in organisms which lack either or both of asparaginyl-tRNA or glutaminyl-tRNA synthetases. The reaction takes place in the presence of glutamine and ATP through an activated phospho-Asp-tRNA(Asn) or phospho-Glu-tRNA(Gln). This Mesorhizobium japonicum (strain LMG 29417 / CECT 9101 / MAFF 303099) (Mesorhizobium loti (strain MAFF 303099)) protein is Aspartyl/glutamyl-tRNA(Asn/Gln) amidotransferase subunit B.